The following is a 359-amino-acid chain: Phosphoserine aminotransferase (359 aa).

L-glutamate is bound at residue Arg-41. The pyridoxal 5'-phosphate site is built by Trp-101, Thr-151, Asp-170, and Gln-193. An N6-(pyridoxal phosphate)lysine modification is found at Lys-194. 235-236 (NT) contributes to the pyridoxal 5'-phosphate binding site.

It belongs to the class-V pyridoxal-phosphate-dependent aminotransferase family. SerC subfamily. As to quaternary structure, homodimer. Requires pyridoxal 5'-phosphate as cofactor.

It is found in the cytoplasm. The catalysed reaction is O-phospho-L-serine + 2-oxoglutarate = 3-phosphooxypyruvate + L-glutamate. It catalyses the reaction 4-(phosphooxy)-L-threonine + 2-oxoglutarate = (R)-3-hydroxy-2-oxo-4-phosphooxybutanoate + L-glutamate. The protein operates within amino-acid biosynthesis; L-serine biosynthesis; L-serine from 3-phospho-D-glycerate: step 2/3. It functions in the pathway cofactor biosynthesis; pyridoxine 5'-phosphate biosynthesis; pyridoxine 5'-phosphate from D-erythrose 4-phosphate: step 3/5. Catalyzes the reversible conversion of 3-phosphohydroxypyruvate to phosphoserine and of 3-hydroxy-2-oxo-4-phosphonooxybutanoate to phosphohydroxythreonine. This Laribacter hongkongensis (strain HLHK9) protein is Phosphoserine aminotransferase.